Reading from the N-terminus, the 218-residue chain is Uracil-DNA glycosylase (218 aa).

The Proton acceptor role is filled by Asp-60.

The protein belongs to the uracil-DNA glycosylase (UDG) superfamily. UNG family.

The protein localises to the cytoplasm. It carries out the reaction Hydrolyzes single-stranded DNA or mismatched double-stranded DNA and polynucleotides, releasing free uracil.. Functionally, excises uracil residues from the DNA which can arise as a result of misincorporation of dUMP residues by DNA polymerase or due to deamination of cytosine. This chain is Uracil-DNA glycosylase, found in Francisella philomiragia subsp. philomiragia (strain ATCC 25017 / CCUG 19701 / FSC 153 / O#319-036).